The sequence spans 344 residues: Selenide, water dikinase (344 aa).

The active site involves Cys16. Residues Lys19 and 47–49 contribute to the ATP site; that span reads SRD. Residue Asp50 participates in Mg(2+) binding. ATP-binding positions include Asp67, Asp90, and 138-140; that span reads GHS. Position 90 (Asp90) interacts with Mg(2+). Residue Asp226 coordinates Mg(2+).

The protein belongs to the selenophosphate synthase 1 family. Class I subfamily. In terms of assembly, homodimer. Mg(2+) is required as a cofactor.

The enzyme catalyses hydrogenselenide + ATP + H2O = selenophosphate + AMP + phosphate + 2 H(+). Functionally, synthesizes selenophosphate from selenide and ATP. This is Selenide, water dikinase from Pseudomonas putida (strain ATCC 47054 / DSM 6125 / CFBP 8728 / NCIMB 11950 / KT2440).